The following is a 122-amino-acid chain: MTRVRRGYTARRRRIKIRLFASTFRGAHSRLTRTTTQQKMRALVSSHRDRGRQKRDFRRLWITRINAVTRDNGVFHSYSKFIHNLYKRQLLLNRKILAQIAIENKNCLYMISNKISQIKEII.

Belongs to the bacterial ribosomal protein bL20 family.

It is found in the plastid. The protein localises to the chloroplast. Functionally, binds directly to 23S ribosomal RNA and is necessary for the in vitro assembly process of the 50S ribosomal subunit. It is not involved in the protein synthesizing functions of that subunit. This Dioscorea elephantipes (Elephant's foot yam) protein is Large ribosomal subunit protein bL20c.